The primary structure comprises 245 residues: Platelet-derived growth factor subunit B (245 aa).

Positions 1-20 are cleaved as a signal peptide; sequence MNRCWALFLSLCCYLRLVSA. The propeptide at 21–81 is removed in mature form; it reads EGDPIPEELY…ELESLSRGRR (61 aa). N63 carries N-linked (GlcNAc...) asparagine glycosylation. Cystine bridges form between C101–C145, C134–C182, and C138–C184. Positions 195–245 are cleaved as a propeptide — removed in mature form; it reads RSPGSSQEQRARTPQTRVTIRTVRVRRPPKGKHQKFKHTHDKKALKETLGA. The span at 220-235 shows a compositional bias: basic residues; sequence RRPPKGKHQKFKHTHD. A disordered region spans residues 220-245; the sequence is RRPPKGKHQKFKHTHDKKALKETLGA. Positions 236–245 are enriched in basic and acidic residues; sequence KKALKETLGA.

Belongs to the PDGF/VEGF growth factor family. In terms of assembly, antiparallel homodimer; disulfide-linked. Antiparallel heterodimer with PDGFA; disulfide-linked. The PDGFB homodimer interacts with PDGFRA and PDGFRB homodimers, and with heterodimers formed by PDGFRA and PDGFRB. The heterodimer composed of PDGFA and PDGFB interacts with PDGFRB homodimers, and with heterodimers formed by PDGFRA and PDGFRB. Interacts with XLKD1. Interacts with LRP1. Interacts with SORL1 (via the N-terminal ectodomain). Interacts with CD82; this interaction inhibits PDGFB-mediated signaling pathway.

The protein localises to the secreted. Growth factor that plays an essential role in the regulation of embryonic development, cell proliferation, cell migration, survival and chemotaxis. Potent mitogen for cells of mesenchymal origin. Required for normal proliferation and recruitment of pericytes and vascular smooth muscle cells in the central nervous system, skin, lung, heart and placenta. Required for normal blood vessel development, and for normal development of kidney glomeruli. Plays an important role in wound healing. Signaling is modulated by the formation of heterodimers with PDGFA. The polypeptide is Platelet-derived growth factor subunit B (PDGFB) (Felis catus (Cat)).